The chain runs to 173 residues: Phosphopantetheine adenylyltransferase (173 aa).

Ser9 lines the substrate pocket. Residues 9–10 and His17 each bind ATP; that span reads SF. Lys41, Thr73, and Arg87 together coordinate substrate. Residues 88 to 90, Glu98, and 123 to 129 contribute to the ATP site; these read GLR and YQHLSSS.

Belongs to the bacterial CoaD family. In terms of assembly, homohexamer. Mg(2+) is required as a cofactor.

It is found in the cytoplasm. The catalysed reaction is (R)-4'-phosphopantetheine + ATP + H(+) = 3'-dephospho-CoA + diphosphate. The protein operates within cofactor biosynthesis; coenzyme A biosynthesis; CoA from (R)-pantothenate: step 4/5. Its function is as follows. Reversibly transfers an adenylyl group from ATP to 4'-phosphopantetheine, yielding dephospho-CoA (dPCoA) and pyrophosphate. The polypeptide is Phosphopantetheine adenylyltransferase (Limosilactobacillus reuteri (strain DSM 20016) (Lactobacillus reuteri)).